A 339-amino-acid polypeptide reads, in one-letter code: Adenylosuccinate synthetase (339 aa).

GTP-binding positions include 12–18 (GDEGKGS) and 42–44 (GHS). The active-site Proton acceptor is aspartate 13. Residues aspartate 13 and glycine 42 each coordinate Mg(2+). IMP-binding positions include 13-16 (DEGK), 40-43 (NAGH), threonine 127, arginine 141, glutamine 179, threonine 194, and arginine 256. Histidine 43 acts as the Proton donor in catalysis. A substrate-binding site is contributed by 252–258 (TVTGRRR). Residues arginine 258, 284-286 (MLD), and 324-326 (KTG) each bind GTP.

Belongs to the adenylosuccinate synthetase family. In terms of assembly, homodimer. The cofactor is Mg(2+).

The protein resides in the cytoplasm. The enzyme catalyses IMP + L-aspartate + GTP = N(6)-(1,2-dicarboxyethyl)-AMP + GDP + phosphate + 2 H(+). It participates in purine metabolism; AMP biosynthesis via de novo pathway; AMP from IMP: step 1/2. Its function is as follows. Plays an important role in the de novo pathway of purine nucleotide biosynthesis. Catalyzes the first committed step in the biosynthesis of AMP from IMP. In Thermococcus onnurineus (strain NA1), this protein is Adenylosuccinate synthetase.